A 287-amino-acid polypeptide reads, in one-letter code: Ethylene-responsive transcription factor ERF116 (287 aa).

Positions 80–140 (YPVGVRPRPS…ASSGSAVSSS (61 aa)) form a DNA-binding region, AP2/ERF.

It belongs to the AP2/ERF transcription factor family. ERF subfamily.

It localises to the nucleus. In terms of biological role, probably acts as a transcriptional activator. Binds to the GCC-box pathogenesis-related promoter element. May be involved in the regulation of gene expression by stress factors and by components of stress signal transduction pathways. In Arabidopsis thaliana (Mouse-ear cress), this protein is Ethylene-responsive transcription factor ERF116 (ERF116).